We begin with the raw amino-acid sequence, 312 residues long: Apolipoprotein E (312 aa).

The N-terminal stretch at 1 to 18 is a signal peptide; sequence MKALWAVLLATLLTGCLA. 8 consecutive repeat copies span residues 72-93, 94-115, 116-137, 138-159, 160-181, 182-203, 204-225, and 226-247. The tract at residues 72-247 is 8 X 22 AA approximate tandem repeats; it reads VLMEDTMTEV…RLEEMREHME (176 aa). At Met-135 the chain carries Methionine sulfoxide. The tract at residues 150-160 is LDL and other lipoprotein receptors binding; that stretch reads HLRKMRKRLMR. Residues 150–160 are LDL receptor binding; it reads HLRKMRKRLMR. Heparin is bound at residue 154-157; it reads MRKR. Residues 202 to 282 form a lipid-binding and lipoprotein association region; sequence TANLGAGAAQ…SWFEPLVEDM (81 aa). Residue 221-228 coordinates heparin; that stretch reads SERLRGRL. The segment at 258 to 312 is homooligomerization; that stretch reads QQIRLQAEIFQARLKSWFEPLVEDMHRQLANLVEKIQSSVATNSVLSTSVPQENQ. Positions 270-282 are specificity for association with VLDL; it reads RLKSWFEPLVEDM.

It belongs to the apolipoprotein A1/A4/E family. As to quaternary structure, homotetramer. May interact with ABCA1; functionally associated with ABCA1 in the biogenesis of HDLs. May interact with APP/A4 amyloid-beta peptide; the interaction is extremely stable in vitro but its physiological significance is unclear. May interact with MAPT. May interact with MAP2. In the cerebrospinal fluid, interacts with secreted SORL1. Interacts with PMEL; this allows the loading of PMEL luminal fragment on ILVs to induce fibril nucleation. Post-translationally, APOE exists as multiple glycosylated and sialylated glycoforms within cells and in plasma. The extent of glycosylation and sialylation are tissue and context specific. In terms of processing, glycated in plasma VLDL. Phosphorylated by FAM20C in the extracellular medium.

It is found in the secreted. The protein resides in the extracellular space. It localises to the extracellular matrix. The protein localises to the extracellular vesicle. Its subcellular location is the endosome. It is found in the multivesicular body. APOE is an apolipoprotein, a protein associating with lipid particles, that mainly functions in lipoprotein-mediated lipid transport between organs via the plasma and interstitial fluids. APOE is a core component of plasma lipoproteins and is involved in their production, conversion and clearance. Apolipoproteins are amphipathic molecules that interact both with lipids of the lipoprotein particle core and the aqueous environment of the plasma. As such, APOE associates with chylomicrons, chylomicron remnants, very low density lipoproteins (VLDL) and intermediate density lipoproteins (IDL) but shows a preferential binding to high-density lipoproteins (HDL). It also binds a wide range of cellular receptors including the LDL receptor/LDLR, the LDL receptor-related proteins LRP1, LRP2 and LRP8 and the very low-density lipoprotein receptor/VLDLR that mediate the cellular uptake of the APOE-containing lipoprotein particles. Finally, APOE also has a heparin-binding activity and binds heparan-sulfate proteoglycans on the surface of cells, a property that supports the capture and the receptor-mediated uptake of APOE-containing lipoproteins by cells. A main function of APOE is to mediate lipoprotein clearance through the uptake of chylomicrons, VLDLs, and HDLs by hepatocytes. APOE is also involved in the biosynthesis by the liver of VLDLs as well as their uptake by peripheral tissues ensuring the delivery of triglycerides and energy storage in muscle, heart and adipose tissues. By participating in the lipoprotein-mediated distribution of lipids among tissues, APOE plays a critical role in plasma and tissues lipid homeostasis. APOE is also involved in two steps of reverse cholesterol transport, the HDLs-mediated transport of cholesterol from peripheral tissues to the liver, and thereby plays an important role in cholesterol homeostasis. First, it is functionally associated with ABCA1 in the biogenesis of HDLs in tissues. Second, it is enriched in circulating HDLs and mediates their uptake by hepatocytes. APOE also plays an important role in lipid transport in the central nervous system, regulating neuron survival and sprouting. This is Apolipoprotein E (Apoe) from Arvicanthis niloticus (African grass rat).